The chain runs to 325 residues: Tetraacyldisaccharide 4'-kinase (325 aa).

51–58 (VVGGAGKT) contacts ATP.

The protein belongs to the LpxK family.

It catalyses the reaction a lipid A disaccharide + ATP = a lipid IVA + ADP + H(+). Its pathway is glycolipid biosynthesis; lipid IV(A) biosynthesis; lipid IV(A) from (3R)-3-hydroxytetradecanoyl-[acyl-carrier-protein] and UDP-N-acetyl-alpha-D-glucosamine: step 6/6. Transfers the gamma-phosphate of ATP to the 4'-position of a tetraacyldisaccharide 1-phosphate intermediate (termed DS-1-P) to form tetraacyldisaccharide 1,4'-bis-phosphate (lipid IVA). The polypeptide is Tetraacyldisaccharide 4'-kinase (Paramagnetospirillum magneticum (strain ATCC 700264 / AMB-1) (Magnetospirillum magneticum)).